Consider the following 304-residue polypeptide: PTB domain-containing engulfment adapter protein 1 (304 aa).

Threonine 16 carries the phosphothreonine modification. One can recognise a PID domain in the interval 21-176; it reads SKHYIPYNAK…AGMQKRIQDL (156 aa). The stretch at 159 to 200 forms a coiled coil; it reads DVETRKQIAGMQKRIQDLETENMELKNKVQDLESRLRTTQVS. Serine 223 is subject to Phosphoserine.

It belongs to the ced-6 family. In terms of assembly, homodimer. Interacts with clathrin and MEGF10. Interacts with GDP-bound ARF6, but not with GTP-bound ARF6. Part of a complex composed of GULP1, ACAP1 and ARF6. Interacts with ACAP1, LRP1 and STAB2. In terms of tissue distribution, detected throughout the brain, particularly in Purkinje cells, hippocampal and cortical neurons (at protein level).

It localises to the cytoplasm. Its function is as follows. Modulates cellular glycosphingolipid and cholesterol transport. May play a role in the internalization of various LRP1 ligands, such as PSAP. May function as an adapter protein. Required for efficient phagocytosis of apoptotic cells. Increases cellular levels of GTP-bound ARF6. The sequence is that of PTB domain-containing engulfment adapter protein 1 (Gulp1) from Mus musculus (Mouse).